The primary structure comprises 261 residues: Ribosomal RNA large subunit methyltransferase E (261 aa).

Positions 81, 83, 104, 120, and 144 each coordinate S-adenosyl-L-methionine. Catalysis depends on Lys184, which acts as the Proton acceptor. Residues 233 to 261 are disordered; sequence GNALGHEVEDDGPMPHDPREDATADEDQD. A compositionally biased stretch (basic and acidic residues) spans 245–254; sequence PMPHDPREDA.

Belongs to the class I-like SAM-binding methyltransferase superfamily. RNA methyltransferase RlmE family.

Its subcellular location is the cytoplasm. The catalysed reaction is uridine(2552) in 23S rRNA + S-adenosyl-L-methionine = 2'-O-methyluridine(2552) in 23S rRNA + S-adenosyl-L-homocysteine + H(+). Specifically methylates the uridine in position 2552 of 23S rRNA at the 2'-O position of the ribose in the fully assembled 50S ribosomal subunit. This is Ribosomal RNA large subunit methyltransferase E from Allorhizobium ampelinum (strain ATCC BAA-846 / DSM 112012 / S4) (Agrobacterium vitis (strain S4)).